A 596-amino-acid polypeptide reads, in one-letter code: Aspartate--tRNA(Asp/Asn) ligase (596 aa).

An L-aspartate-binding site is contributed by Glu-175. The segment at 199–202 is aspartate; sequence QQYK. Positions 221 and 454 each coordinate L-aspartate. 221–223 is an ATP binding site; sequence RDE. Glu-488 is an ATP binding site. Arg-495 provides a ligand contact to L-aspartate. 540–543 contacts ATP; sequence GVDR.

The protein belongs to the class-II aminoacyl-tRNA synthetase family. Type 1 subfamily. In terms of assembly, homodimer.

The protein localises to the cytoplasm. The catalysed reaction is tRNA(Asx) + L-aspartate + ATP = L-aspartyl-tRNA(Asx) + AMP + diphosphate. Functionally, aspartyl-tRNA synthetase with relaxed tRNA specificity since it is able to aspartylate not only its cognate tRNA(Asp) but also tRNA(Asn). Reaction proceeds in two steps: L-aspartate is first activated by ATP to form Asp-AMP and then transferred to the acceptor end of tRNA(Asp/Asn). This is Aspartate--tRNA(Asp/Asn) ligase from Bartonella henselae (strain ATCC 49882 / DSM 28221 / CCUG 30454 / Houston 1) (Rochalimaea henselae).